The chain runs to 450 residues: 3-phosphoshikimate 1-carboxyvinyltransferase (450 aa).

Residues 1–23 are disordered; the sequence is MSSHGAPIPMTSSACGPLTGEAR. 3-phosphoshikimate is bound by residues Lys-28, Ser-29, and Arg-33. Lys-28 contributes to the phosphoenolpyruvate binding site. The phosphoenolpyruvate site is built by Gly-101 and Arg-129. Residues Ser-174, Gln-176, Asp-327, and Lys-354 each coordinate 3-phosphoshikimate. Gln-176 lines the phosphoenolpyruvate pocket. The Proton acceptor role is filled by Asp-327. The phosphoenolpyruvate site is built by Arg-358 and Arg-403.

The protein belongs to the EPSP synthase family. As to quaternary structure, monomer.

The protein resides in the cytoplasm. The catalysed reaction is 3-phosphoshikimate + phosphoenolpyruvate = 5-O-(1-carboxyvinyl)-3-phosphoshikimate + phosphate. The protein operates within metabolic intermediate biosynthesis; chorismate biosynthesis; chorismate from D-erythrose 4-phosphate and phosphoenolpyruvate: step 6/7. Catalyzes the transfer of the enolpyruvyl moiety of phosphoenolpyruvate (PEP) to the 5-hydroxyl of shikimate-3-phosphate (S3P) to produce enolpyruvyl shikimate-3-phosphate and inorganic phosphate. This chain is 3-phosphoshikimate 1-carboxyvinyltransferase, found in Roseobacter denitrificans (strain ATCC 33942 / OCh 114) (Erythrobacter sp. (strain OCh 114)).